The chain runs to 204 residues: Transcriptional regulator GfcR 1 (204 aa).

The protein belongs to the purine/pyrimidine phosphoribosyltransferase family. GfcR subfamily.

In Methanosarcina barkeri (strain Fusaro / DSM 804), this protein is Transcriptional regulator GfcR 1.